The following is a 214-amino-acid chain: Charged multivesicular body protein 2b (214 aa).

The stretch at 25-55 forms a coiled coil; the sequence is QRQIARDRTALEKQEKQLEMEIKKMAKTGNR. Residues 178-199 are disordered; sequence MAHAPSAARKTPSAATAKADGI. An MIT-interacting motif motif is present at residues 202–212; the sequence is EDIERQLKALG.

It belongs to the SNF7 family. In terms of assembly, probable core component of the endosomal sorting required for transport complex III (ESCRT-III). ESCRT-III components are thought to multimerize to form a flat lattice on the perimeter membrane of the endosome.

Its subcellular location is the cytoplasm. It localises to the cytosol. The protein resides in the late endosome membrane. In terms of biological role, probable core component of the endosomal sorting required for transport complex III (ESCRT-III) which is involved in multivesicular bodies (MVBs) formation and sorting of endosomal cargo proteins into MVBs. MVBs contain intraluminal vesicles (ILVs) that are generated by invagination and scission from the limiting membrane of the endosome and mostly are delivered to lysosomes enabling degradation of membrane proteins, such as stimulated growth factor receptors, lysosomal enzymes and lipids. The sequence is that of Charged multivesicular body protein 2b (chmp2b) from Danio rerio (Zebrafish).